Consider the following 392-residue polypeptide: Phosphopentomutase (392 aa).

Mn(2+) is bound by residues aspartate 15, aspartate 287, histidine 292, aspartate 328, histidine 329, and histidine 340.

This sequence belongs to the phosphopentomutase family. Mn(2+) serves as cofactor.

Its subcellular location is the cytoplasm. It catalyses the reaction 2-deoxy-alpha-D-ribose 1-phosphate = 2-deoxy-D-ribose 5-phosphate. The catalysed reaction is alpha-D-ribose 1-phosphate = D-ribose 5-phosphate. Its pathway is carbohydrate degradation; 2-deoxy-D-ribose 1-phosphate degradation; D-glyceraldehyde 3-phosphate and acetaldehyde from 2-deoxy-alpha-D-ribose 1-phosphate: step 1/2. Isomerase that catalyzes the conversion of deoxy-ribose 1-phosphate (dRib-1-P) and ribose 1-phosphate (Rib-1-P) to deoxy-ribose 5-phosphate (dRib-5-P) and ribose 5-phosphate (Rib-5-P), respectively. This Syntrophotalea carbinolica (strain DSM 2380 / NBRC 103641 / GraBd1) (Pelobacter carbinolicus) protein is Phosphopentomutase.